Here is a 354-residue protein sequence, read N- to C-terminus: Arginase-2, mitochondrial (354 aa).

The N-terminal 22 residues, 1–22, are a transit peptide targeting the mitochondrion; that stretch reads MSLRSHLSRLLRTQVHSVRKKS. Residues histidine 120, aspartate 143, histidine 145, and aspartate 147 each contribute to the Mn(2+) site. Substrate is bound by residues 145–149, 156–158, and aspartate 202; these read HADIN and SGN. Positions 251 and 253 each coordinate Mn(2+). Substrate is bound by residues threonine 265 and glutamate 296. A disordered region spans residues 332-354; that stretch reads IVYDQLPTPSSPDESESEERVRI.

This sequence belongs to the arginase family. As to quaternary structure, homotrimer. It depends on Mn(2+) as a cofactor.

It localises to the mitochondrion. The enzyme catalyses L-arginine + H2O = urea + L-ornithine. It participates in nitrogen metabolism; urea cycle; L-ornithine and urea from L-arginine: step 1/1. Functionally, may play a role in the regulation of extra-urea cycle arginine metabolism and also in down-regulation of nitric oxide synthesis. Extrahepatic arginase functions to regulate L-arginine bioavailability to nitric oxid synthase (NOS). Arginine metabolism is a critical regulator of innate and adaptive immune responses. Seems to be involved in negative regulation of the survival capacity of activated T cells. May suppress inflammation-related signaling in asthmatic airway epithelium. May play a role in promoting prenatal immune suppression. Regulates RPS6KB1 signaling, which promotes endothelial cell senescence and inflammation and implicates NOS3/eNOS dysfunction. Can inhibit endothelial autophagy independently of its enzymatic activity implicating mTORC2 signaling. Involved in vascular smooth muscle cell senescence and apoptosis independently of its enzymatic activity. The protein is Arginase-2, mitochondrial (ARG2) of Bos taurus (Bovine).